The sequence spans 137 residues: MLVPKRVKHRREFRGKMRGYAKGGDTVSFGEYGLQATTSHWITNRQIEAARIAMTRYMKRNGQVWIKIFPHKSYTAKAIGVRMGSGKGAPEGWVAPVKRGVVMFELGGVDEATAREALRLASHKLPVKTKFVKRGEA.

It belongs to the universal ribosomal protein uL16 family. In terms of assembly, part of the 50S ribosomal subunit.

Binds 23S rRNA and is also seen to make contacts with the A and possibly P site tRNAs. The protein is Large ribosomal subunit protein uL16 of Lactococcus lactis subsp. cremoris (strain SK11).